Consider the following 338-residue polypeptide: Methionine import ATP-binding protein MetN 1 (338 aa).

Residues 2–241 enclose the ABC transporter domain; sequence IELHQVSKSF…AKHATTKRFV (240 aa). 38-45 is an ATP binding site; it reads GYSGAGKS.

It belongs to the ABC transporter superfamily. Methionine importer (TC 3.A.1.24) family. In terms of assembly, the complex is composed of two ATP-binding proteins (MetN), two transmembrane proteins (MetI) and a solute-binding protein (MetQ).

Its subcellular location is the cell membrane. The catalysed reaction is L-methionine(out) + ATP + H2O = L-methionine(in) + ADP + phosphate + H(+). It catalyses the reaction D-methionine(out) + ATP + H2O = D-methionine(in) + ADP + phosphate + H(+). Functionally, part of the ABC transporter complex MetNIQ involved in methionine import. Responsible for energy coupling to the transport system. The protein is Methionine import ATP-binding protein MetN 1 of Listeria monocytogenes serovar 1/2a (strain ATCC BAA-679 / EGD-e).